The chain runs to 284 residues: 2,3,4,5-tetrahydropyridine-2,6-dicarboxylate N-succinyltransferase (284 aa).

Substrate contacts are provided by arginine 111 and aspartate 148.

This sequence belongs to the transferase hexapeptide repeat family. In terms of assembly, homotrimer.

It is found in the cytoplasm. It carries out the reaction (S)-2,3,4,5-tetrahydrodipicolinate + succinyl-CoA + H2O = (S)-2-succinylamino-6-oxoheptanedioate + CoA. It participates in amino-acid biosynthesis; L-lysine biosynthesis via DAP pathway; LL-2,6-diaminopimelate from (S)-tetrahydrodipicolinate (succinylase route): step 1/3. This is 2,3,4,5-tetrahydropyridine-2,6-dicarboxylate N-succinyltransferase from Ehrlichia ruminantium (strain Gardel).